Reading from the N-terminus, the 325-residue chain is Olfactory receptor 5T18 (325 aa).

Residues methionine 1–glutamine 22 are Extracellular-facing. The N-linked (GlcNAc...) asparagine glycan is linked to asparagine 3. Helical transmembrane passes span isoleucine 23 to leucine 43 and isoleucine 44 to leucine 64. Residues serine 65–threonine 97 lie on the Extracellular side of the membrane. Cysteine 95 and cysteine 187 are joined by a disulfide. The helical transmembrane segment at glutamine 98–tyrosine 118 threads the bilayer. Residues aspartate 119–tyrosine 139 are Cytoplasmic-facing. The chain crosses the membrane as a helical span at residues isoleucine 140–alanine 160. Over threonine 161–glutamate 194 the chain is Extracellular. The chain crosses the membrane as a helical span at residues leucine 195–serine 215. Residues tyrosine 216 to lysine 234 are Cytoplasmic-facing. Residues valine 235 to phenylalanine 255 traverse the membrane as a helical segment. The Extracellular portion of the chain corresponds to methionine 256–aspartate 269. A helical membrane pass occupies residues methionine 270–leucine 290. Topologically, residues arginine 291–proline 325 are cytoplasmic.

This sequence belongs to the G-protein coupled receptor 1 family.

It is found in the cell membrane. Its function is as follows. Potential odorant receptor. This Mus musculus (Mouse) protein is Olfactory receptor 5T18.